We begin with the raw amino-acid sequence, 1538 residues long: Phenolphthiocerol/phthiocerol polyketide synthase subunit B (1538 aa).

Residues 33-455 (AEPVAVVGIG…GTNAHVIIEQ (423 aa)) enclose the Ketosynthase family 3 (KS3) domain. Catalysis depends on for beta-ketoacyl synthase activity residues cysteine 205, histidine 340, and histidine 377. The segment at 553-882 (DGSPGPGTVF…TNLYTADIAH (330 aa)) is acyltransferase. Catalysis depends on serine 649, which acts as the For malonyltransferase activity. 1153 to 1196 (SQLVIGATGNIGPHLIRQLARMGAKTIVAMARKPGALDELTQCL) serves as a coordination point for NADP(+). The interval 1153 to 1328 (SQLVIGATGN…TVVDWGLWKS (176 aa)) is beta-ketoacyl reductase. The 76-residue stretch at 1423 to 1498 (DMLFDHVGAL…SLTDYLATVL (76 aa)) folds into the Carrier domain. Serine 1458 carries the O-(pantetheine 4'-phosphoryl)serine modification.

Requires NADP(+) as cofactor. Pantetheine 4'-phosphate is required as a cofactor.

The catalysed reaction is icosanoyl-[(phenol)carboxyphthiodiolenone synthase] + 2 (S)-methylmalonyl-CoA + 3 malonyl-CoA + 5 NADPH + 10 H(+) = C32-carboxyphthiodiolenone-[(phenol)carboxyphthiodiolenone synthase] + 5 CO2 + 5 NADP(+) + 5 CoA + 2 H2O. It catalyses the reaction docosanoyl-[(phenol)carboxyphthiodiolenone synthase] + 2 (S)-methylmalonyl-CoA + 3 malonyl-CoA + 5 NADPH + 10 H(+) = C34-carboxyphthiodiolenone-[(phenol)carboxyphthiodiolenone synthase] + 5 CO2 + 5 NADP(+) + 5 CoA + 2 H2O. The enzyme catalyses 17-(4-hydroxyphenyl)heptadecanoyl-[(phenol)carboxyphthiodiolenone synthase] + 2 (S)-methylmalonyl-CoA + 3 malonyl-CoA + 5 NADPH + 10 H(+) = C35-(phenol)carboxyphthiodiolenone-[(phenol)carboxyphthiodiolenone synthase] + 5 CO2 + 5 NADP(+) + 5 CoA + 2 H2O. It carries out the reaction 19-(4-hydroxyphenyl)nonadecanoyl-[(phenol)carboxyphthiodiolenone synthase] + 2 (S)-methylmalonyl-CoA + 3 malonyl-CoA + 5 NADPH + 10 H(+) = C37-(phenol)carboxyphthiodiolenone-[(phenol)carboxyphthiodiolenone synthase] + 5 CO2 + 5 NADP(+) + 5 CoA + 2 H2O. Its pathway is lipid metabolism; fatty acid biosynthesis. Its function is as follows. Part of the PpsABCDE complex involved in the biosynthesis of the lipid core common to phthiocerols and phenolphthiocerols by successive additions of malonyl-CoA or methylmalonyl-CoA extender units. PpsA can accept as substrate the activated forms of either icosanoyl (C20), docosanoyl (C22) or lignoceroyl (C24) groups from FadD26, or a (4-hydroxyphenyl)-C17 or (4-hydroxyphenyl)-C19 fatty acyl from FadD29. PpsA initiates the biosynthesis and extends its substrate using a malonyl-CoA extender unit. The PpsB and PpsC proteins add the second and third malonyl-CoA extender units. PpsD adds an (R)-methylmalonyl unit and PpsE adds a second (R)-methylmalonyl unit. The incorporation of the methylmalonyl units results in formation of two branched methyl groups in the elongated product. The protein is Phenolphthiocerol/phthiocerol polyketide synthase subunit B (ppsB) of Mycobacterium tuberculosis (strain CDC 1551 / Oshkosh).